Here is a 284-residue protein sequence, read N- to C-terminus: Putative mitochondrial carrier protein PET8 (284 aa).

Solcar repeat units follow at residues 2-75 (NTFF…MKVK), 92-178 (IDTT…LKKT), and 192-271 (KGAI…VHSL). 6 helical membrane-spanning segments follow: residues 5–25 (FLSL…FFPI), 50–70 (GLGS…ISYD), 98–118 (MLSS…AEVV), 153–169 (GWST…CIQF), 194–214 (AICG…LDFL), and 252–272 (MWIS…HSLL).

The protein belongs to the mitochondrial carrier (TC 2.A.29) family.

The protein resides in the mitochondrion inner membrane. The polypeptide is Putative mitochondrial carrier protein PET8 (PET8) (Saccharomyces cerevisiae (strain ATCC 204508 / S288c) (Baker's yeast)).